The following is a 222-amino-acid chain: Cytidylate kinase (222 aa).

11–19 is an ATP binding site; sequence GPAGAGKST.

Belongs to the cytidylate kinase family. Type 1 subfamily.

It localises to the cytoplasm. The catalysed reaction is CMP + ATP = CDP + ADP. It carries out the reaction dCMP + ATP = dCDP + ADP. The sequence is that of Cytidylate kinase from Desulforamulus reducens (strain ATCC BAA-1160 / DSM 100696 / MI-1) (Desulfotomaculum reducens).